The primary structure comprises 150 residues: Ribonuclease K6 (150 aa).

Positions 1 to 23 (MVLCFPLLLLLLVLWGPVCPLHA) are cleaved as a signal peptide. H38 serves as the catalytic Proton acceptor. Cystine bridges form between C46/C104, C60/C114, C78/C129, and C85/C92. Residues 61 to 65 (KHQNT) and K86 each bind substrate. An N-linked (GlcNAc...) asparagine glycan is attached at N100. R105 provides a ligand contact to substrate. Residue H145 is the Proton donor of the active site.

It belongs to the pancreatic ribonuclease family. In terms of assembly, interacts (via N-terminus) with bacterial lipopolysaccharide (LPS).

It is found in the secreted. The protein resides in the lysosome. It localises to the cytoplasmic granule. In terms of biological role, ribonuclease which shows a preference for the pyrimidines uridine and cytosine. Has potent antibacterial activity against a range of Gram-positive and Gram-negative bacteria, including P.aeruginosa, A.baumanii, M.luteus, S.aureus, E.faecalis, E.faecium, S.saprophyticus and E.coli. Causes loss of bacterial membrane integrity, and also promotes agglutination of Gram-negative bacteria. Probably contributes to urinary tract sterility. Bactericidal activity is independent of RNase activity. This chain is Ribonuclease K6 (RNASE6), found in Pan troglodytes (Chimpanzee).